A 466-amino-acid chain; its full sequence is UDP-N-acetylmuramoylalanine--D-glutamate ligase (466 aa).

Position 121 to 127 (121 to 127 (GTNGKST)) interacts with ATP.

Belongs to the MurCDEF family.

It localises to the cytoplasm. It carries out the reaction UDP-N-acetyl-alpha-D-muramoyl-L-alanine + D-glutamate + ATP = UDP-N-acetyl-alpha-D-muramoyl-L-alanyl-D-glutamate + ADP + phosphate + H(+). It participates in cell wall biogenesis; peptidoglycan biosynthesis. Cell wall formation. Catalyzes the addition of glutamate to the nucleotide precursor UDP-N-acetylmuramoyl-L-alanine (UMA). The protein is UDP-N-acetylmuramoylalanine--D-glutamate ligase of Nitrobacter hamburgensis (strain DSM 10229 / NCIMB 13809 / X14).